Consider the following 274-residue polypeptide: Siroheme biosynthesis protein MET8 (274 aa).

NAD(+)-binding positions include 23–24, 43–45, and Phe-93; these read EV and SPD. Catalysis depends on Asp-141, which acts as the Proton acceptor.

It belongs to the precorrin-2 dehydrogenase / sirohydrochlorin ferrochelatase family. MET8 subfamily. As to quaternary structure, homodimer.

The enzyme catalyses precorrin-2 + NAD(+) = sirohydrochlorin + NADH + 2 H(+). It catalyses the reaction siroheme + 2 H(+) = sirohydrochlorin + Fe(2+). It functions in the pathway porphyrin-containing compound metabolism; siroheme biosynthesis; siroheme from sirohydrochlorin: step 1/1. Its pathway is porphyrin-containing compound metabolism; siroheme biosynthesis; sirohydrochlorin from precorrin-2: step 1/1. Catalyzes the conversion of precorrin-2 into siroheme. This reaction consist of the NAD-dependent oxidation of precorrin-2 into sirohydrochlorin and its subsequent ferrochelation into siroheme. In Saccharomyces cerevisiae (strain ATCC 204508 / S288c) (Baker's yeast), this protein is Siroheme biosynthesis protein MET8.